A 220-amino-acid polypeptide reads, in one-letter code: Claudin-24 (220 aa).

Topologically, residues 1 to 10 (MALIFRTAMQ) are cytoplasmic. Residues 11–31 (SVGLLLSLLGWILSIITTYLP) form a helical membrane-spanning segment. The Extracellular segment spans residues 32–81 (HWKNLNLDLNEMENWTMGLWQTCVIQEEVGMQCKDFDSFLALPAELRVSR). The helical transmembrane segment at 82-102 (ILMFLSNGLGFLGLLVSGFGL) threads the bilayer. Over 103–117 (DCLRIGESQRDLKRR) the chain is Cytoplasmic. A helical transmembrane segment spans residues 118–138 (LLILGGILSWASGITALVPVS). At 139–161 (WVAHKTVQEFWDENVPDFVPRWE) the chain is on the extracellular side. The chain crosses the membrane as a helical span at residues 162–182 (FGEALFLGWFAGLSLLLGGCL). The Cytoplasmic portion of the chain corresponds to 183 to 220 (LNCAACSSHAPLALGHYAVAQMQTQCPYLEDGTADPQV).

Belongs to the claudin family.

It is found in the cell junction. The protein resides in the tight junction. Its subcellular location is the cell membrane. In terms of biological role, plays a major role in tight junction-specific obliteration of the intercellular space, through calcium-independent cell-adhesion activity. The chain is Claudin-24 from Homo sapiens (Human).